A 270-amino-acid chain; its full sequence is Palmitoyltransferase ZDHHC12-A (270 aa).

Residues 1–8 (MNKSLFKS) lie on the Cytoplasmic side of the membrane. A helical transmembrane segment spans residues 9-29 (GCLVRTAHVILTWIITLILFL). Residues 30-45 (HNTDLRRCQERGDLLQ) lie on the Lumenal side of the membrane. The helical transmembrane segment at 46–66 (PLVFSSVLLLSVLLYFTVSLM) threads the bilayer. The Cytoplasmic segment spans residues 67–145 (DPGFVLSDSQ…DNCVGELNHR (79 aa)). The region spanning 102-152 (RRCGYCFLLQPMRARHCKWCKRCVRRFDHHCPWIDNCVGELNHRWFLLYLC) is the DHHC domain. The S-palmitoyl cysteine intermediate role is filled by Cys132. The helical transmembrane segment at 146-166 (WFLLYLCVQFTAVCWGLQSAW) threads the bilayer. The Lumenal segment spans residues 167–182 (SGFISAPSWQQWFTQN). A helical membrane pass occupies residues 183 to 203 (VFLLVAFAVTAVFSVVLLLLL). Residues 204–270 (CIHAYLASVN…MYIRHNNASV (67 aa)) lie on the Cytoplasmic side of the membrane.

It belongs to the DHHC palmitoyltransferase family.

The protein resides in the golgi apparatus membrane. The protein localises to the endoplasmic reticulum membrane. The catalysed reaction is L-cysteinyl-[protein] + hexadecanoyl-CoA = S-hexadecanoyl-L-cysteinyl-[protein] + CoA. Palmitoyltransferase that catalyzes the addition of palmitate onto various protein substrates. Has a palmitoyltransferase activity toward gephyrin/GPHN, regulating its clustering at synapses and its function in gamma-aminobutyric acid receptor clustering. Acts as an inhibitor of the NLRP3 inflammasome by mediating palmitoylation of NLRP3, thereby promoting NLRP3 degradation by the chaperone-mediated autophagy (CMA) process. The sequence is that of Palmitoyltransferase ZDHHC12-A from Danio rerio (Zebrafish).